A 281-amino-acid chain; its full sequence is Survival motor neuron protein 1 (281 aa).

Disordered stretches follow at residues 1–20 (MANGAEDVVFCRGTGQSDDS) and 42–77 (ALKGEDGATPQENDNPGKKRKNNKKNKSRKRCNAAP). Phosphothreonine is present on T14. 2 positions are modified to phosphoserine: S17 and S20. Basic residues predominate over residues 59–73 (KKRKNNKKNKSRKRC). Positions 80-140 (EWQVGDSCYA…LTEPPDMDED (61 aa)) constitute a Tudor domain. Positions 145–159 (ANVKETESSTEESDR) are enriched in basic and acidic residues. A disordered region spans residues 145-242 (ANVKETESST…PMSPDFGEDD (98 aa)). Pro residues-rich tracts occupy residues 179-197 (MGPPSWFPSFPPGPPPPPP) and 212-235 (PSFPGWPPMIPLGPPMIPPPPPMS). The segment at 225 to 252 (PPMIPPPPPMSPDFGEDDEALGSMLISW) is P2 (binding site for SNRPB). The tract at residues 264 to 279 (GLRQGRKEAAASKKSH) is required for interaction with SYNCRIP.

It belongs to the SMN family. Homodimer. Component of an import snRNP complex composed of kpnb1, rnut1, smn1 and znf259. Part of the core SMN complex that contains smn1, gemin2/sip1, ddx20/gemin3, gemin4, gemin5, gemin6, gemin7, gemin8 and strap/unrip. Interacts with ddx20, fbl, nola1, rnut1, syncrip and with several spliceosomal snRNP core Sm proteins, including snrpb, snrpd1, snrpd2, snrpd3, snrpe and ilf3. Interacts with elavl4.

The protein localises to the nucleus. It localises to the gem. Its subcellular location is the cajal body. The protein resides in the cytoplasm. It is found in the cytoplasmic granule. The protein localises to the perikaryon. It localises to the cell projection. Its subcellular location is the neuron projection. The protein resides in the myofibril. It is found in the sarcomere. The protein localises to the z line. The SMN complex plays an essential role in spliceosomal snRNP assembly in the cytoplasm and is required for pre-mRNA splicing in the nucleus. It may also play a role in the metabolism of snoRNPs. Required in motor neurons and proprioceptive neurons to ensure correct U12 intron splicing and proper levels of tmem41b mRNA. Required for the maturation of motor neuron axonal branches and dendrites. The chain is Survival motor neuron protein 1 (smn1) from Danio rerio (Zebrafish).